The following is a 213-amino-acid chain: Orotidine 5'-phosphate decarboxylase (213 aa).

Substrate is bound by residues D6, K25, 52-61 (DLKLADIDNT), S109, 158-168 (PGVGAQGAMIG), G181, and R182. Catalysis depends on K54, which acts as the Proton donor.

Belongs to the OMP decarboxylase family. Type 1 subfamily. In terms of assembly, homodimer.

The catalysed reaction is orotidine 5'-phosphate + H(+) = UMP + CO2. Its pathway is pyrimidine metabolism; UMP biosynthesis via de novo pathway; UMP from orotate: step 2/2. In terms of biological role, catalyzes the decarboxylation of orotidine 5'-monophosphate (OMP) to uridine 5'-monophosphate (UMP). The polypeptide is Orotidine 5'-phosphate decarboxylase (Sulfurisphaera tokodaii (strain DSM 16993 / JCM 10545 / NBRC 100140 / 7) (Sulfolobus tokodaii)).